Consider the following 630-residue polypeptide: MKSSQRRIKRHAMRDMSISTLLLSVVLLPSVVSANDHVYFNPPSPGSPFLGPQIPLTGPPSLTNEHEFTLRHIYERGTNDQPDLHRRLDIKPHTRLWAVSDDGLEKELVTFDTPLVASSSPLTIQRLADRRPSVIEGYLTAARYNGEAVALSSSDWVMDTLAGPDVTKKETVLTFAKMTANDYIEEPGTEDWNYIHGRFNYSSSFGWQSDGLRGHIYADTKNNTIVISLKGTSPALFDGAGTTTNDKINDNLFFSCCCGQGGSYLWRQVCDCQQSAFTANLTCIAEAMNDENKYYRAAIDLYTNVTDMYPDANVWMTGHSLGGAMSSLLGLTFGLPVVTFEAVPEALPAARLGLPSPPGHDPRLPQTRKYTGTYHFGHTADPVYMGTCNGVGSICTWGGYAMESACHTGQMCVYDTVEDKGWRVALSTHRIKAVISDVLEVYDNVPPCAAEEECYDCELWKFFRSNGSETTTTSRTSTTTTPTTTRTLTCETPGWWGCLDESTTTTATTATSTTTTTSTCKTPGWFGCKDSTTTVDATAAPTVTTTIATPTTFPISSTTCKDPGWFGCRDPSSTTASVTAPPFSTSTSSDHVRADHSIGDGAAHPLTRMYLERLRQVEFAWGSDIEHYEI.

Residues 1–20 (MKSSQRRIKRHAMRDMSIST) lie on the Cytoplasmic side of the membrane. Residues 21–40 (LLLSVVLLPSVVSANDHVYF) traverse the membrane as a helical; Signal-anchor for type II membrane protein segment. Residues 41 to 630 (NPPSPGSPFL…WGSDIEHYEI (590 aa)) are Lumenal-facing. 4 N-linked (GlcNAc...) asparagine glycosylation sites follow: Asn-200, Asn-222, Asn-280, and Asn-304. Ser-320 serves as the catalytic Charge relay system. The N-linked (GlcNAc...) asparagine glycan is linked to Asn-466. Polar residues predominate over residues 577 to 589 (SVTAPPFSTSTSS). The tract at residues 577–599 (SVTAPPFSTSTSSDHVRADHSIG) is disordered.

Belongs to the AB hydrolase superfamily. Lipase family. In terms of assembly, binds to both phosphatidylinositol (PI) and phosphatidylinositol 3,5-bisphosphate (PIP2).

Its subcellular location is the endosome. The protein localises to the multivesicular body membrane. The protein resides in the prevacuolar compartment membrane. The enzyme catalyses a triacylglycerol + H2O = a diacylglycerol + a fatty acid + H(+). Lipase which is essential for lysis of subvacuolar cytoplasm to vacuole targeted bodies and intravacuolar autophagic bodies. Involved in the lysis of intravacuolar multivesicular body (MVB) vesicles. The intravacuolar membrane disintegration by atg15 is critical to life span extension. The protein is Putative lipase atg15 (atg15) of Aspergillus clavatus (strain ATCC 1007 / CBS 513.65 / DSM 816 / NCTC 3887 / NRRL 1 / QM 1276 / 107).